Here is a 274-residue protein sequence, read N- to C-terminus: Thiamine kinase (274 aa).

It belongs to the thiamine kinase family.

The catalysed reaction is thiamine + ATP = thiamine phosphate + ADP + H(+). It participates in cofactor biosynthesis; thiamine diphosphate biosynthesis; thiamine phosphate from thiamine: step 1/1. Functionally, catalyzes the ATP-dependent phosphorylation of thiamine to thiamine phosphate. Is involved in thiamine salvage. The sequence is that of Thiamine kinase from Escherichia coli O157:H7.